The chain runs to 325 residues: Tetraacyldisaccharide 4'-kinase (325 aa).

An ATP-binding site is contributed by 58–65 (TVGGSGKT).

The protein belongs to the LpxK family.

It carries out the reaction a lipid A disaccharide + ATP = a lipid IVA + ADP + H(+). Its pathway is glycolipid biosynthesis; lipid IV(A) biosynthesis; lipid IV(A) from (3R)-3-hydroxytetradecanoyl-[acyl-carrier-protein] and UDP-N-acetyl-alpha-D-glucosamine: step 6/6. Its function is as follows. Transfers the gamma-phosphate of ATP to the 4'-position of a tetraacyldisaccharide 1-phosphate intermediate (termed DS-1-P) to form tetraacyldisaccharide 1,4'-bis-phosphate (lipid IVA). The sequence is that of Tetraacyldisaccharide 4'-kinase from Coxiella burnetii (strain Dugway 5J108-111).